The chain runs to 236 residues: 2-C-methyl-D-erythritol 4-phosphate cytidylyltransferase (236 aa).

The protein belongs to the IspD/TarI cytidylyltransferase family. IspD subfamily. In terms of assembly, homodimer.

It catalyses the reaction 2-C-methyl-D-erythritol 4-phosphate + CTP + H(+) = 4-CDP-2-C-methyl-D-erythritol + diphosphate. The protein operates within isoprenoid biosynthesis; isopentenyl diphosphate biosynthesis via DXP pathway; isopentenyl diphosphate from 1-deoxy-D-xylulose 5-phosphate: step 2/6. Its function is as follows. Catalyzes the formation of 4-diphosphocytidyl-2-C-methyl-D-erythritol from CTP and 2-C-methyl-D-erythritol 4-phosphate (MEP). The chain is 2-C-methyl-D-erythritol 4-phosphate cytidylyltransferase from Salmonella paratyphi A (strain ATCC 9150 / SARB42).